Reading from the N-terminus, the 384-residue chain is Guanine nucleotide-binding protein alpha-1 subunit (384 aa).

Gly2 is lipidated: N-myristoyl glycine. Cys5 carries the S-palmitoyl cysteine lipid modification. One can recognise a G-alpha domain in the interval 38–384 (HIRKLLLLGA…RRNLFEAGLL (347 aa)). The tract at residues 41 to 54 (KLLLLGAGESGKST) is G1 motif. The GTP site is built by Glu49, Ser50, Gly51, Lys52, Ser53, Thr54, Asp163, Leu188, Thr194, Gly222, Asn288, Lys289, Asp291, and Ala356. Ser53 contacts Mg(2+). The tract at residues 186–194 (DVLLARVRT) is G2 motif. Thr194 provides a ligand contact to Mg(2+). The tract at residues 215 to 224 (YRLFDVGGQR) is G3 motif. The segment at 284 to 291 (MLFLNKFD) is G4 motif. Positions 354–359 (TTALDQ) are G5 motif.

Belongs to the G-alpha family. As to quaternary structure, g proteins are composed of 3 units; alpha, beta and gamma. The alpha chain contains the guanine nucleotide binding site. Mg(2+) serves as cofactor.

Its function is as follows. Guanine nucleotide-binding proteins (G proteins) are involved as modulators or transducers in various transmembrane signaling systems. The chain is Guanine nucleotide-binding protein alpha-1 subunit (GPA1) from Pisum sativum (Garden pea).